The chain runs to 463 residues: Type II NADH:quinone oxidoreductase Ndh (463 aa).

Residues 21-25 (GSGFG) and V89 contribute to the FAD site. E184 is an active-site residue. Residues D322 and 333-334 (AQ) each bind FAD. The chain crosses the membrane as a helical span at residues 387–407 (FSGFIAWLIWLVLHLAYLIGF).

Belongs to the NADH dehydrogenase family. FAD serves as cofactor.

It is found in the cell inner membrane. The enzyme catalyses a quinone + NADH + H(+) = a quinol + NAD(+). The catalysed reaction is a menaquinone + NADH + H(+) = a menaquinol + NAD(+). It catalyses the reaction a ubiquinone + NADH + H(+) = a ubiquinol + NAD(+). With respect to regulation, inhibited by phenothiazine analogs. Inhibited by 2-mercapto-quinazolinones. Not inhibited by classic inhibitors of type I NADH dehydrogenase, such as rotenone, piericidin A and pyridaben. Its function is as follows. Alternative, nonproton pumping NADH:quinone oxidoreductase that delivers electrons to the respiratory chain by oxidation of NADH and reduction of quinones. Ndh is probably the main NADH dehydrogenase of M.tuberculosis. The sequence is that of Type II NADH:quinone oxidoreductase Ndh from Mycobacterium tuberculosis (strain ATCC 25618 / H37Rv).